The primary structure comprises 433 residues: Type I acyl-CoA thioesterase mpaH (433 aa).

The interval 58-246 (HGVGLPKELY…IKARFGTTAD (189 aa)) is abhydrolase domain. Val-60 provides a ligand contact to substrate. The active-site Nucleophile is the Ser-139. Phe-140 contacts substrate. Active-site residues include Asp-163 and His-365.

Belongs to the AB hydrolase superfamily. MpaH hydrolase family. Homodimer.

It localises to the peroxisome matrix. It catalyses the reaction mycophenolyl-CoA + H2O = mycophenolate + CoA + H(+). It participates in secondary metabolite biosynthesis; terpenoid biosynthesis. Type I acyl-CoA thioesterase; part of the gene cluster that mediates the biosynthesis of mycophenolic acid (MPA), the first isolated antibiotic natural product in the world obtained from a culture of Penicillium brevicompactum in 1893. MpaH acts as a peroxisomal acyl-CoA hydrolase that converts MPA-CoA into the final product MPA. The first step of the pathway is the synthesis of 5-methylorsellinic acid (5MOA) by the cytosolic polyketide synthase mpaC. 5MOA is then converted to the phthalide compound 5,7-dihydroxy-4,6-dimethylphthalide (DHMP) by the endoplasmic reticulum-bound cytochrome P450 monooxygenase mpaDE. MpaDE first catalyzes hydroxylation of 5-MOA to 4,6-dihydroxy-2-(hydroxymethyl)-3-methylbenzoic acid (DHMB). MpaDE then acts as a lactone synthase that catalyzes the ring closure to convert DHMB into DHMP. The next step is the prenylation of DHMP by the Golgi apparatus-associated prenyltransferase mpaA to yield farnesyl-DHMP (FDHMP). The ER-bound oxygenase mpaB then mediates the oxidative cleavage the C19-C20 double bond in FDHMP to yield FDHMP-3C via a mycophenolic aldehyde intermediate. The O-methyltransferase mpaG catalyzes the methylation of FDHMP-3C to yield MFDHMP-3C. After the cytosolic methylation of FDHMP-3C, MFDHMP-3C enters into peroxisomes probably via free diffusion due to its low molecular weight. Upon a peroxisomal CoA ligation reaction, catalyzed by a beta-oxidation component enzyme acyl-CoA ligase ACL891, MFDHMP-3C-CoA would then be restricted to peroxisomes for the following beta-oxidation pathway steps. The peroxisomal beta-oxidation machinery than converts MFDHMP-3C-CoA into MPA_CoA, via a beta-oxidation chain-shortening process. Finally mpaH acts as a peroxisomal acyl-CoA hydrolase with high substrate specificity toward MPA-CoA to release the final product MPA. The sequence is that of Type I acyl-CoA thioesterase mpaH from Penicillium brevicompactum.